A 162-amino-acid chain; its full sequence is Nucleotide-binding protein AnaeK_0101 (162 aa).

The protein belongs to the YajQ family.

Functionally, nucleotide-binding protein. The protein is Nucleotide-binding protein AnaeK_0101 of Anaeromyxobacter sp. (strain K).